The chain runs to 525 residues: Protein-serine O-palmitoleoyltransferase porcupine (525 aa).

9 consecutive transmembrane segments (helical) span residues 83 to 103 (VMQY…LCLL), 125 to 145 (LIIL…LAAV), 159 to 179 (GAQV…LLIW), 220 to 240 (FAYL…WVSF), 260 to 280 (LLPN…VAPA), 301 to 318 (VRSS…LLVA), 395 to 415 (SLLH…AFLA), 467 to 487 (NLAF…VLLG), and 505 to 525 (QAGY…LFIS). His398 is an active-site residue.

This sequence belongs to the membrane-bound acyltransferase family. Porcupine subfamily. Interacts with wg and Wnt5.

It is found in the endoplasmic reticulum membrane. The catalysed reaction is [Wnt protein]-L-serine + (9Z)-hexadecenoyl-CoA = [Wnt protein]-O-(9Z)-hexadecenoyl-L-serine + CoA. Its function is as follows. Protein-serine O-palmitoleoyltransferase that acts as a key regulator of the Wnt signaling pathway by mediating the attachment of palmitoleate, a 16-carbon monounsaturated fatty acid (C16:1(9Z)), to Wnt proteins. Serine palmitoleoylation of Wnt proteins is required for efficient binding to frizzled receptors. Also facilitates the glycosylation of Wnt family members, including wg and Wnt5. The cotranslational disulfide bond formation of wg competes with the N-glycosylation. Porc stimulates the post-translational N-glycosylation by anchoring wg at the ER membrane, probably through acylation. The sequence is that of Protein-serine O-palmitoleoyltransferase porcupine from Drosophila melanogaster (Fruit fly).